A 167-amino-acid polypeptide reads, in one-letter code: General odorant-binding protein 1 (167 aa).

The first 22 residues, 1–22, serve as a signal peptide directing secretion; sequence MAHTLQTVVLLLGTSILHPILA. 3 cysteine pairs are disulfide-bonded: Cys-41–Cys-76, Cys-72–Cys-130, and Cys-119–Cys-139.

The protein belongs to the PBP/GOBP family. As to expression, antenna.

Functionally, present in the aqueous fluid surrounding olfactory sensory dendrites and are thought to aid in the capture and transport of hydrophobic odorants into and through this fluid. The chain is General odorant-binding protein 1 from Antheraea pernyi (Chinese oak silk moth).